The primary structure comprises 157 residues: MQPTMRIIVSMALLAYAVASAYHSNVKLRRDGKMVLYPFPRVGRASGNTWQLPLNDLYPEYEPAQVKRQLYAFPRVGRDPVMSRLGRSDLSRVESHEFQPMAVRRTESPGMWFGPRLGRAFKNDDDEITIQNESNDHSEPEQTELIHEDRRKRQTLN.

Positions 1 to 21 are cleaved as a signal peptide; it reads MQPTMRIIVSMALLAYAVASA. Positions 22–28 are excised as a propeptide; the sequence is YHSNVKL. Val42 carries the valine amide modification. Residues 45-66 constitute a propeptide that is removed on maturation; the sequence is ASGNTWQLPLNDLYPEYEPAQV. Gln69 carries the pyrrolidone carboxylic acid; partial modification. A Valine amide modification is found at Val76. Leu85 and Leu117 each carry leucine amide. Positions 120-157 are excised as a propeptide; that stretch reads AFKNDDDEITIQNESNDHSEPEQTELIHEDRRKRQTLN. A disordered region spans residues 131–157; sequence QNESNDHSEPEQTELIHEDRRKRQTLN. Basic and acidic residues predominate over residues 134-151; it reads SNDHSEPEQTELIHEDRR.

This sequence belongs to the pyrokinin family. In terms of tissue distribution, CAPA-periviscerokinin 1: Expressed in corpora cardiaca (CC), corpora allata (CA), antennal lobe (AL) and gnathal ganglion (GNG) (at protein level). Expression detected in most animals in CC and CA and in some animals in AL and GNG (at protein level). CAPA-periviscerokinin 2: Expressed in corpora cardiaca (CC), corpora allata (CA), antennal lobe (AL) and gnathal ganglion (GNG) (at protein level). For non-pyroglutamate form, expression in AL detected in all animals, in CC, CA and GNG in most animals (at protein level). For pyroglutamate form, expression in CC and CA detected in most animals, in AL and GNG in some animals (at protein level). CAPA-periviscerokinin 3: Expressed in corpora cardiaca (CC), corpora allata (CA), antennal lobe (AL) and gnathal ganglion (GNG). Expression detected in most animals in CC and CA and in some animals in AL and GNG (at protein level). CAPA-precursor-related peptide 3: Expressed in corpora cardiaca (CC), corpora allata (CA), antennal lobe (AL) and gnathal ganglion (GNG) (at protein level). Expression in CC and CA detected in some animals, expression in Al and GNG detected in few animals (at protein level). CAPA-trypto-pyrokinin: Expressed in corpora cardiaca (CC), corpora allata (CA), antennal lobe (AL) and gnathal ganglion (GNG) (at protein level). Expression in CC, CA and GNG detected in most animals, in AL in some animals (at protein level).

It is found in the secreted. Functionally, myoactive. This is CAPA peptides from Agrotis ipsilon (Black cutworm moth).